The chain runs to 421 residues: Testin (421 aa).

In terms of domain architecture, PET spans 92–199 (MILTNPVAAK…GDVKLPREMD (108 aa)). A disordered region spans residues 133–164 (EKQPVAGSEGAQYRKKQLAKQLPAHDQDPSKC). Over residues 155-164 (PAHDQDPSKC) the composition is skewed to basic and acidic residues. LIM zinc-binding domains lie at 234-297 (YSCY…CDSE), 299-359 (PRCA…NHAV), and 362-421 (QGCH…KMMS).

It belongs to the prickle / espinas / testin family. Interacts via LIM domain 1 with ZYX. Interacts (via LIM domain 3) with ENAH and VASP. Interacts with ALKBH4, talin, actin, alpha-actinin, GRIP1 and PXN. Interacts (via LIM domain 2) with ACTL7A (via N-terminus). Heterodimer with ACTL7A; the heterodimer interacts with ENAH to form a heterotrimer.

Its subcellular location is the cytoplasm. It localises to the cell junction. It is found in the focal adhesion. Its function is as follows. Scaffold protein that may play a role in cell adhesion, cell spreading and in the reorganization of the actin cytoskeleton. Plays a role in the regulation of cell proliferation. May act as a tumor suppressor. The protein is Testin (TES) of Mustela putorius furo (European domestic ferret).